A 373-amino-acid polypeptide reads, in one-letter code: Chaperone protein DnaJ (373 aa).

The region spanning 5 to 70 is the J domain; the sequence is DYYEVLGVHR…QQRVIYDQYG (66 aa). A CR-type zinc finger spans residues 136-214; it reads GLETKIQIPR…CHGSGRVRGK (79 aa). Positions 149, 152, 166, 169, 188, 191, 202, and 205 each coordinate Zn(2+). CXXCXGXG motif repeat units follow at residues 149-156, 166-173, 188-195, and 202-209; these read CGTCDGIG, CPTCQGAG, CPECNGEG, and CEECHGSG.

The protein belongs to the DnaJ family. As to quaternary structure, homodimer. Zn(2+) is required as a cofactor.

The protein resides in the cytoplasm. Functionally, participates actively in the response to hyperosmotic and heat shock by preventing the aggregation of stress-denatured proteins and by disaggregating proteins, also in an autonomous, DnaK-independent fashion. Unfolded proteins bind initially to DnaJ; upon interaction with the DnaJ-bound protein, DnaK hydrolyzes its bound ATP, resulting in the formation of a stable complex. GrpE releases ADP from DnaK; ATP binding to DnaK triggers the release of the substrate protein, thus completing the reaction cycle. Several rounds of ATP-dependent interactions between DnaJ, DnaK and GrpE are required for fully efficient folding. Also involved, together with DnaK and GrpE, in the DNA replication of plasmids through activation of initiation proteins. The polypeptide is Chaperone protein DnaJ (Syntrophotalea carbinolica (strain DSM 2380 / NBRC 103641 / GraBd1) (Pelobacter carbinolicus)).